The primary structure comprises 155 residues: Aspartate carbamoyltransferase regulatory chain (155 aa).

Zn(2+)-binding residues include Cys110, Cys115, Cys139, and Cys142.

It belongs to the PyrI family. As to quaternary structure, contains catalytic and regulatory chains. Requires Zn(2+) as cofactor.

Its function is as follows. Involved in allosteric regulation of aspartate carbamoyltransferase. This is Aspartate carbamoyltransferase regulatory chain from Yersinia pseudotuberculosis serotype IB (strain PB1/+).